We begin with the raw amino-acid sequence, 378 residues long: Protein RecA (378 aa).

79–86 (GPESSGKT) serves as a coordination point for ATP.

Belongs to the RecA family.

Its subcellular location is the cytoplasm. Its function is as follows. Can catalyze the hydrolysis of ATP in the presence of single-stranded DNA, the ATP-dependent uptake of single-stranded DNA by duplex DNA, and the ATP-dependent hybridization of homologous single-stranded DNAs. It interacts with LexA causing its activation and leading to its autocatalytic cleavage. The sequence is that of Protein RecA from Streptococcus pyogenes serotype M49 (strain NZ131).